Reading from the N-terminus, the 319-residue chain is Serine/threonine-protein phosphatase PP1 isozyme 2 (319 aa).

Asp61, His63, Asp89, and Asn121 together coordinate Mn(2+). His122 (proton donor) is an active-site residue. Mn(2+)-binding residues include His170 and His245.

The protein belongs to the PPP phosphatase family. PP-1 subfamily. Requires Mn(2+) as cofactor.

The catalysed reaction is O-phospho-L-seryl-[protein] + H2O = L-seryl-[protein] + phosphate. It catalyses the reaction O-phospho-L-threonyl-[protein] + H2O = L-threonyl-[protein] + phosphate. The chain is Serine/threonine-protein phosphatase PP1 isozyme 2 from Acetabularia peniculus (Green alga).